The sequence spans 216 residues: Ribosomal RNA small subunit methyltransferase G (216 aa).

Residues Gly-81, Phe-86, 130 to 131, and Arg-144 each bind S-adenosyl-L-methionine; that span reads AE.

It belongs to the methyltransferase superfamily. RNA methyltransferase RsmG family.

It localises to the cytoplasm. The enzyme catalyses guanosine(527) in 16S rRNA + S-adenosyl-L-methionine = N(7)-methylguanosine(527) in 16S rRNA + S-adenosyl-L-homocysteine. Functionally, specifically methylates the N7 position of guanine in position 527 of 16S rRNA. The protein is Ribosomal RNA small subunit methyltransferase G of Rhodospirillum centenum (strain ATCC 51521 / SW).